Here is a 174-residue protein sequence, read N- to C-terminus: UPF0336 protein MAP_3996c (174 aa).

Residues 11–131 (IGSHYRAPDY…VLAEIRSEVT (121 aa)) form the MaoC-like domain.

It belongs to the UPF0336 family.

This is UPF0336 protein MAP_3996c from Mycolicibacterium paratuberculosis (strain ATCC BAA-968 / K-10) (Mycobacterium paratuberculosis).